A 693-amino-acid chain; its full sequence is Translation factor GUF1 homolog, chloroplastic (693 aa).

The transit peptide at 1–51 (MATDLSSSSTLLLSRNCKTPPFYHTTNSLSLSKTHHLYASRNAVVSRLRLL) directs the protein to the chloroplast. Positions 86-267 (SNIRNFCIIA…AIVERIPSPR (182 aa)) constitute a tr-type G domain. Residues 95–102 (AHIDHGKS), 160–164 (DTPGH), and 214–217 (NKID) each bind GTP.

Belongs to the TRAFAC class translation factor GTPase superfamily. Classic translation factor GTPase family. LepA subfamily.

The protein localises to the plastid. Its subcellular location is the chloroplast. It carries out the reaction GTP + H2O = GDP + phosphate + H(+). Its function is as follows. Promotes chloroplast protein synthesis. May act as a fidelity factor of the translation reaction, by catalyzing a one-codon backward translocation of tRNAs on improperly translocated ribosomes. The sequence is that of Translation factor GUF1 homolog, chloroplastic from Ricinus communis (Castor bean).